The sequence spans 198 residues: MSYYAFEGLIPVVHPDAFVHPSAVLIGDVIVGAGVYIGPLASLRGDYGRLILEAGSNLQDGCIMHGYCDTDTIVHENGHIGHGAILHGCVVGRDALVGMNSVIMDGAVIGEESIVAAMSFVKAGFQGEARQLLVGSPARVLRQVTDQELYWKRLNTKEYQDLAIRCRTGLSETKPLTQVEENRPRLKGTTDVKPKSAQ.

The segment at 179 to 198 (VEENRPRLKGTTDVKPKSAQ) is disordered. Residues 180–198 (EENRPRLKGTTDVKPKSAQ) show a composition bias toward basic and acidic residues.

Belongs to the transferase hexapeptide repeat family.

The protein operates within amine and polyamine metabolism; carnitine metabolism. Its function is as follows. Overproduction of CaiE stimulates the activity of CaiB and CaiD. In Salmonella typhi, this protein is Carnitine operon protein CaiE.